We begin with the raw amino-acid sequence, 303 residues long: Phosphatidylglycerol--prolipoprotein diacylglyceryl transferase (303 aa).

4 consecutive transmembrane segments (helical) span residues 18–38 (LGPFSLRWYGLLIAISVLVGL), 58–78 (LLPILVLASVIGARIYYVAFE), 106–126 (IWGGGIAIHGALIMGTLSIIF), and 133–153 (EHFWDVIDVLVPSVALGQAIG). Arg-154 contacts a 1,2-diacyl-sn-glycero-3-phospho-(1'-sn-glycerol). The next 3 helical transmembrane spans lie at 193–213 (PTFLYESVWNIFVFGILIFLF), 223–243 (LPPGSLSCLYLITYSLGRFWI), and 266–286 (IAQLISLFLISAGLLGIWRIY).

This sequence belongs to the Lgt family.

The protein resides in the cell inner membrane. The enzyme catalyses L-cysteinyl-[prolipoprotein] + a 1,2-diacyl-sn-glycero-3-phospho-(1'-sn-glycerol) = an S-1,2-diacyl-sn-glyceryl-L-cysteinyl-[prolipoprotein] + sn-glycerol 1-phosphate + H(+). The protein operates within protein modification; lipoprotein biosynthesis (diacylglyceryl transfer). Functionally, catalyzes the transfer of the diacylglyceryl group from phosphatidylglycerol to the sulfhydryl group of the N-terminal cysteine of a prolipoprotein, the first step in the formation of mature lipoproteins. This is Phosphatidylglycerol--prolipoprotein diacylglyceryl transferase from Prochlorococcus marinus (strain NATL2A).